The sequence spans 380 residues: Cytochrome b (380 aa).

4 helical membrane passes run 34–54 (FGSLLGMCLIIQILTGLFLAM), 78–99 (WLIRNIHANGASMFFICVYLHI), 114–134 (WNIGVVILLLLMVTAFVGYVL), and 179–199 (FFTFHFLFPFVTAALTMIHLL). 2 residues coordinate heme b: His84 and His98. The heme b site is built by His183 and His197. His202 serves as a coordination point for a ubiquinone. The next 4 helical transmembrane spans lie at 227-247 (YKDLVGFFILLFLLTLLALFT), 289-309 (LGGVLALVFSILILLLVPILH), 321-341 (ITQILFWLLVTNTIILTWIGG), and 348-368 (FITIGQIASITYFSFFLILFP).

It belongs to the cytochrome b family. As to quaternary structure, the cytochrome bc1 complex contains 3 respiratory subunits (MT-CYB, CYC1 and UQCRFS1), 2 core proteins (UQCRC1 and UQCRC2) and probably 6 low-molecular weight proteins. The cofactor is heme b.

It is found in the mitochondrion inner membrane. Functionally, component of the ubiquinol-cytochrome c reductase complex (complex III or cytochrome b-c1 complex) that is part of the mitochondrial respiratory chain. The b-c1 complex mediates electron transfer from ubiquinol to cytochrome c. Contributes to the generation of a proton gradient across the mitochondrial membrane that is then used for ATP synthesis. The protein is Cytochrome b (mt-cyb) of Hemitrygon laosensis (Mekong freshwater stingray).